A 234-amino-acid polypeptide reads, in one-letter code: Uridylate kinase (234 aa).

ATP is bound at residue 9–12 (KLSG). Gly-51 contacts UMP. Residues Gly-52 and Arg-56 each coordinate ATP. Residues Asp-71 and 132-139 (CGNPFFTT) each bind UMP. Residues Thr-159, Tyr-165, and Asp-168 each contribute to the ATP site.

It belongs to the UMP kinase family. In terms of assembly, homohexamer.

Its subcellular location is the cytoplasm. It carries out the reaction UMP + ATP = UDP + ADP. It participates in pyrimidine metabolism; CTP biosynthesis via de novo pathway; UDP from UMP (UMPK route): step 1/1. Its activity is regulated as follows. Inhibited by UTP. Catalyzes the reversible phosphorylation of UMP to UDP. This chain is Uridylate kinase, found in Prochlorococcus marinus (strain AS9601).